We begin with the raw amino-acid sequence, 361 residues long: Chorismate synthase (361 aa).

R48 and R54 together coordinate NADP(+). FMN-binding positions include 125 to 127 (RSS), 238 to 239 (NA), G278, 293 to 297 (KPTSS), and R319.

It belongs to the chorismate synthase family. Homotetramer. The cofactor is FMNH2.

It catalyses the reaction 5-O-(1-carboxyvinyl)-3-phosphoshikimate = chorismate + phosphate. It functions in the pathway metabolic intermediate biosynthesis; chorismate biosynthesis; chorismate from D-erythrose 4-phosphate and phosphoenolpyruvate: step 7/7. Its function is as follows. Catalyzes the anti-1,4-elimination of the C-3 phosphate and the C-6 proR hydrogen from 5-enolpyruvylshikimate-3-phosphate (EPSP) to yield chorismate, which is the branch point compound that serves as the starting substrate for the three terminal pathways of aromatic amino acid biosynthesis. This reaction introduces a second double bond into the aromatic ring system. The chain is Chorismate synthase from Pectobacterium carotovorum subsp. carotovorum (strain PC1).